The following is a 251-amino-acid chain: CDP-diacylglycerol pyrophosphatase (251 aa).

Residues 4 to 24 (AGLLFLVMIVIAVVAAGIGYW) form a helical membrane-spanning segment.

Belongs to the Cdh family.

The protein resides in the cell inner membrane. It catalyses the reaction a CDP-1,2-diacyl-sn-glycerol + H2O = a 1,2-diacyl-sn-glycero-3-phosphate + CMP + 2 H(+). The protein operates within phospholipid metabolism; CDP-diacylglycerol degradation; phosphatidate from CDP-diacylglycerol: step 1/1. The sequence is that of CDP-diacylglycerol pyrophosphatase from Escherichia coli O7:K1 (strain IAI39 / ExPEC).